Here is a 327-residue protein sequence, read N- to C-terminus: Cobalamin biosynthesis protein CobD (327 aa).

A run of 4 helical transmembrane segments spans residues 61 to 78 (MWLTVGLVAACIFAGLVI), 80 to 102 (SILPHAGTAGAIAEVVIVAILLA), 160 to 182 (GIVAPAFWFLVGGLPGLFAYKFI), and 300 to 322 (AALVLFWSTMSLMTGLVIAASLV).

The protein belongs to the CobD/CbiB family.

The protein localises to the cell membrane. Its pathway is cofactor biosynthesis; adenosylcobalamin biosynthesis. Its function is as follows. Converts cobyric acid to cobinamide by the addition of aminopropanol on the F carboxylic group. The sequence is that of Cobalamin biosynthesis protein CobD from Brucella melitensis biotype 1 (strain ATCC 23456 / CCUG 17765 / NCTC 10094 / 16M).